Reading from the N-terminus, the 115-residue chain is Nucleoid-associated protein Npun_F0448 (115 aa).

The protein belongs to the YbaB/EbfC family. As to quaternary structure, homodimer.

The protein localises to the cytoplasm. It localises to the nucleoid. Binds to DNA and alters its conformation. May be involved in regulation of gene expression, nucleoid organization and DNA protection. In Nostoc punctiforme (strain ATCC 29133 / PCC 73102), this protein is Nucleoid-associated protein Npun_F0448.